The following is a 333-amino-acid chain: Acetyl-coenzyme A carboxylase carboxyl transferase subunit alpha (333 aa).

Residues 48–308 (LLEQKVDALR…KEMLVEELRD (261 aa)) form the CoA carboxyltransferase C-terminal domain.

The protein belongs to the AccA family. As to quaternary structure, acetyl-CoA carboxylase is a heterohexamer composed of biotin carboxyl carrier protein (AccB), biotin carboxylase (AccC) and two subunits each of ACCase subunit alpha (AccA) and ACCase subunit beta (AccD).

The protein localises to the cytoplasm. It catalyses the reaction N(6)-carboxybiotinyl-L-lysyl-[protein] + acetyl-CoA = N(6)-biotinyl-L-lysyl-[protein] + malonyl-CoA. The protein operates within lipid metabolism; malonyl-CoA biosynthesis; malonyl-CoA from acetyl-CoA: step 1/1. Functionally, component of the acetyl coenzyme A carboxylase (ACC) complex. First, biotin carboxylase catalyzes the carboxylation of biotin on its carrier protein (BCCP) and then the CO(2) group is transferred by the carboxyltransferase to acetyl-CoA to form malonyl-CoA. In Chlorobium limicola (strain DSM 245 / NBRC 103803 / 6330), this protein is Acetyl-coenzyme A carboxylase carboxyl transferase subunit alpha.